We begin with the raw amino-acid sequence, 552 residues long: MAELTIRPEEIRDALDAFVASYDPGTAAREEVGRVTDAGDGIAHVEGLPSVMANELLRFQDGTLGLAQNLDVRDIGVVVLGDYAGIEEGQEVHRTGEVLSVPVGDNFLGRVVDPLGAPIDGLGPIEAETRRALELQAPSVMQRQEVREPLQTGIKAIDAMIPVGRGQRQLIIGDRQTGKSAIAIDTIINQKANWESGDPKQQVRCIYVAIGQKGSTIAAVRRSLEEAGAMEYTTIVAAPASDPAGFKYLAPYTGSSIGQHWMYGGKHVLIVFDDLSKQAEAYRAVSLLLRRPPGREAYPGDVFYLHSRLLERCAKLSDELGGGSMTGLPFIETKGNDVSAYIPTNVISITDGQIFLQSDLFNANQRPAIDVGISVSRVGGAAQTKAIKGISGTLKLDLAQFRAMEAFAMFASDLDQASRNQLARGARLVELLKQPQYTPFSLEEQVVSIWAGTTGQLDSVEVSDISRFEREFLEYVKRNHAGVMQGIRETKQFSDGAKDELKKAVDAFKPQFSGGSKGSNVPKDVDAGATDADDISQEKITTRKGGATAARG.

An ATP-binding site is contributed by 173–180 (GDRQTGKS). The interval 509 to 552 (KPQFSGGSKGSNVPKDVDAGATDADDISQEKITTRKGGATAARG) is disordered.

This sequence belongs to the ATPase alpha/beta chains family. In terms of assembly, F-type ATPases have 2 components, CF(1) - the catalytic core - and CF(0) - the membrane proton channel. CF(1) has five subunits: alpha(3), beta(3), gamma(1), delta(1), epsilon(1). CF(0) has three main subunits: a(1), b(2) and c(9-12). The alpha and beta chains form an alternating ring which encloses part of the gamma chain. CF(1) is attached to CF(0) by a central stalk formed by the gamma and epsilon chains, while a peripheral stalk is formed by the delta and b chains.

It is found in the cell membrane. The catalysed reaction is ATP + H2O + 4 H(+)(in) = ADP + phosphate + 5 H(+)(out). Its function is as follows. Produces ATP from ADP in the presence of a proton gradient across the membrane. The alpha chain is a regulatory subunit. In Kineococcus radiotolerans (strain ATCC BAA-149 / DSM 14245 / SRS30216), this protein is ATP synthase subunit alpha.